A 433-amino-acid chain; its full sequence is Enolase (433 aa).

Glutamine 167 provides a ligand contact to (2R)-2-phosphoglycerate. The Proton donor role is filled by glutamate 209. 3 residues coordinate Mg(2+): aspartate 246, glutamate 291, and aspartate 318. The (2R)-2-phosphoglycerate site is built by lysine 343, arginine 372, serine 373, and lysine 394. Lysine 343 acts as the Proton acceptor in catalysis.

Belongs to the enolase family. In terms of assembly, component of the RNA degradosome, a multiprotein complex involved in RNA processing and mRNA degradation. It depends on Mg(2+) as a cofactor.

It is found in the cytoplasm. The protein resides in the secreted. Its subcellular location is the cell surface. It catalyses the reaction (2R)-2-phosphoglycerate = phosphoenolpyruvate + H2O. It participates in carbohydrate degradation; glycolysis; pyruvate from D-glyceraldehyde 3-phosphate: step 4/5. Its function is as follows. Catalyzes the reversible conversion of 2-phosphoglycerate (2-PG) into phosphoenolpyruvate (PEP). It is essential for the degradation of carbohydrates via glycolysis. This Edwardsiella ictaluri (strain 93-146) protein is Enolase.